The primary structure comprises 636 residues: Biosynthetic arginine decarboxylase (636 aa).

K101 carries the post-translational modification N6-(pyridoxal phosphate)lysine. Substrate is bound at residue 286-296 (FDVGGGLAVDY).

Belongs to the Orn/Lys/Arg decarboxylase class-II family. SpeA subfamily. The cofactor is Mg(2+). Requires pyridoxal 5'-phosphate as cofactor.

The catalysed reaction is L-arginine + H(+) = agmatine + CO2. Its pathway is amine and polyamine biosynthesis; agmatine biosynthesis; agmatine from L-arginine: step 1/1. Catalyzes the biosynthesis of agmatine from arginine. This chain is Biosynthetic arginine decarboxylase, found in Shewanella frigidimarina (strain NCIMB 400).